Reading from the N-terminus, the 603-residue chain is Granule-bound starch synthase 1, chloroplastic/amyloplastic (603 aa).

Residues 1–75 (MATITGSSMP…SEKSLGKIVC (75 aa)) constitute a chloroplast transit peptide. Lys-91 contacts ADP-alpha-D-glucose.

It belongs to the glycosyltransferase 1 family. Bacterial/plant glycogen synthase subfamily. In terms of tissue distribution, expressed in pods and leaves. No expression in flowers or stipules.

The protein localises to the plastid. Its subcellular location is the chloroplast. It is found in the amyloplast. The catalysed reaction is an NDP-alpha-D-glucose + [(1-&gt;4)-alpha-D-glucosyl](n) = [(1-&gt;4)-alpha-D-glucosyl](n+1) + a ribonucleoside 5'-diphosphate + H(+). Its pathway is glycan biosynthesis; starch biosynthesis. May be responsible for the synthesis of amylose. The chain is Granule-bound starch synthase 1, chloroplastic/amyloplastic from Pisum sativum (Garden pea).